A 336-amino-acid polypeptide reads, in one-letter code: Glycerol-3-phosphate dehydrogenase [NAD(P)+] (336 aa).

NADPH contacts are provided by tryptophan 16 and lysine 109. Lysine 109, glycine 137, and serine 139 together coordinate sn-glycerol 3-phosphate. Alanine 141 is an NADPH binding site. Sn-glycerol 3-phosphate is bound by residues lysine 192, aspartate 245, serine 255, arginine 256, and asparagine 257. Lysine 192 serves as the catalytic Proton acceptor. Arginine 256 is an NADPH binding site. The NADPH site is built by valine 280 and glutamate 282.

The protein belongs to the NAD-dependent glycerol-3-phosphate dehydrogenase family.

It is found in the cytoplasm. The catalysed reaction is sn-glycerol 3-phosphate + NAD(+) = dihydroxyacetone phosphate + NADH + H(+). The enzyme catalyses sn-glycerol 3-phosphate + NADP(+) = dihydroxyacetone phosphate + NADPH + H(+). It functions in the pathway membrane lipid metabolism; glycerophospholipid metabolism. Catalyzes the reduction of the glycolytic intermediate dihydroxyacetone phosphate (DHAP) to sn-glycerol 3-phosphate (G3P), the key precursor for phospholipid synthesis. The chain is Glycerol-3-phosphate dehydrogenase [NAD(P)+] from Hyphomonas neptunium (strain ATCC 15444).